A 229-amino-acid chain; its full sequence is Large ribosomal subunit protein bL19cy (229 aa).

Residues 1-70 (MATSSHLLPQ…DSKKRKEFIA (70 aa)) constitute a chloroplast transit peptide.

The protein belongs to the bacterial ribosomal protein bL19 family. Part of the 50S ribosomal subunit.

It is found in the plastid. The protein resides in the chloroplast. Functionally, located at the 30S-50S ribosomal subunit interface and binds directly to 23S ribosomal RNA. The polypeptide is Large ribosomal subunit protein bL19cy (Arabidopsis thaliana (Mouse-ear cress)).